The sequence spans 418 residues: Serine protease inhibitor A3M (418 aa).

An N-terminal signal peptide occupies residues 1 to 20; sequence MAFIAALGILMAGICPTVLC. Residues Asn-104, Asn-184, and Asn-269 are each glycosylated (N-linked (GlcNAc...) asparagine). Positions 367-392 are RCL; it reads GTEAAAATGFIFGFRSRRLQTMTVQF.

It belongs to the serpin family. In terms of tissue distribution, expressed in liver and testis.

Its subcellular location is the secreted. The polypeptide is Serine protease inhibitor A3M (Serpina3m) (Mus musculus (Mouse)).